A 333-amino-acid polypeptide reads, in one-letter code: Biotin synthase (333 aa).

The region spanning 54 to 283 (FCSNTFDMCS…RAFIRLAGGR (230 aa)) is the Radical SAM core domain. Positions 72, 76, and 79 each coordinate [4Fe-4S] cluster. The [2Fe-2S] cluster site is built by Ser116, Cys148, Cys208, and Arg278.

Belongs to the radical SAM superfamily. Biotin synthase family. As to quaternary structure, homodimer. [4Fe-4S] cluster is required as a cofactor. The cofactor is [2Fe-2S] cluster.

It catalyses the reaction (4R,5S)-dethiobiotin + (sulfur carrier)-SH + 2 reduced [2Fe-2S]-[ferredoxin] + 2 S-adenosyl-L-methionine = (sulfur carrier)-H + biotin + 2 5'-deoxyadenosine + 2 L-methionine + 2 oxidized [2Fe-2S]-[ferredoxin]. It participates in cofactor biosynthesis; biotin biosynthesis; biotin from 7,8-diaminononanoate: step 2/2. In terms of biological role, catalyzes the conversion of dethiobiotin (DTB) to biotin by the insertion of a sulfur atom into dethiobiotin via a radical-based mechanism. This is Biotin synthase from Brachyspira hyodysenteriae (strain ATCC 49526 / WA1).